The following is a 413-amino-acid chain: MTEASSGPAAKYPLTPSVMHALEVSKRGCDELLIEAEWLQKLARSEATGVPLRIKLGLDPTAPDIHIGHTVVLNKLRQLQDLGHQVIFLIGDFTSTIGDPSGRNSTRPPLTREQIEANAQTYYRQASLVLDPARTEIRYNSEWCDPLGARGMIQLAAKYTVARMMERDDFTKRFRSGIPISVHEFLYPLMQGYDSVALKSDLELGGTDQKFNLLVGRELQKEYGQEPQCILTMPLLVGLDGVEKMSKSKGNYVGVTEAPNEMFGKLMSISDDLMWQYFTLLSFRPLAEIDLMKQEIAAGRNPRDCKVLLAQEIVARFHSQADAEKALEDFNHRARGGVPDDIPAVSLSGAPLGIAQLLKQANLVPSTSEANRNIEQGGVKIDGATVSDKAVKVAAGTYVVQVGKRRFARVTLA.

A 'HIGH' region motif is present at residues 60 to 69 (PTAPDIHIGH). Residues 244-248 (KMSKS) carry the 'KMSKS' region motif. Position 247 (K247) interacts with ATP. The 61-residue stretch at 352-412 (LGIAQLLKQA…GKRRFARVTL (61 aa)) folds into the S4 RNA-binding domain.

The protein belongs to the class-I aminoacyl-tRNA synthetase family. TyrS type 2 subfamily. As to quaternary structure, homodimer.

Its subcellular location is the cytoplasm. The enzyme catalyses tRNA(Tyr) + L-tyrosine + ATP = L-tyrosyl-tRNA(Tyr) + AMP + diphosphate + H(+). In terms of biological role, catalyzes the attachment of tyrosine to tRNA(Tyr) in a two-step reaction: tyrosine is first activated by ATP to form Tyr-AMP and then transferred to the acceptor end of tRNA(Tyr). The sequence is that of Tyrosine--tRNA ligase from Cupriavidus pinatubonensis (strain JMP 134 / LMG 1197) (Cupriavidus necator (strain JMP 134)).